The chain runs to 275 residues: Phosphate import ATP-binding protein PstB 1 (275 aa).

Residues 22–261 (FNVEGVKVYY…SPTEQMFNSP (240 aa)) form the ABC transporter domain. 54–61 (GPSGCGKS) provides a ligand contact to ATP.

This sequence belongs to the ABC transporter superfamily. Phosphate importer (TC 3.A.1.7) family. In terms of assembly, the complex is composed of two ATP-binding proteins (PstB), two transmembrane proteins (PstC and PstA) and a solute-binding protein (PstS).

Its subcellular location is the cell inner membrane. It carries out the reaction phosphate(out) + ATP + H2O = ADP + 2 phosphate(in) + H(+). In terms of biological role, part of the ABC transporter complex PstSACB involved in phosphate import. Responsible for energy coupling to the transport system. The sequence is that of Phosphate import ATP-binding protein PstB 1 from Trichormus variabilis (strain ATCC 29413 / PCC 7937) (Anabaena variabilis).